Reading from the N-terminus, the 92-residue chain is UPF0223 protein SZO_10560 (92 aa).

It belongs to the UPF0223 family.

The protein is UPF0223 protein SZO_10560 of Streptococcus equi subsp. zooepidemicus (strain H70).